A 206-amino-acid polypeptide reads, in one-letter code: Ribosomal RNA large subunit methyltransferase E (206 aa).

Residues Gly61, Trp63, Asp81, Asp97, and Asp122 each contribute to the S-adenosyl-L-methionine site. Lys162 serves as the catalytic Proton acceptor.

The protein belongs to the class I-like SAM-binding methyltransferase superfamily. RNA methyltransferase RlmE family.

It localises to the cytoplasm. It carries out the reaction uridine(2552) in 23S rRNA + S-adenosyl-L-methionine = 2'-O-methyluridine(2552) in 23S rRNA + S-adenosyl-L-homocysteine + H(+). In terms of biological role, specifically methylates the uridine in position 2552 of 23S rRNA at the 2'-O position of the ribose in the fully assembled 50S ribosomal subunit. The chain is Ribosomal RNA large subunit methyltransferase E from Neisseria gonorrhoeae (strain ATCC 700825 / FA 1090).